The sequence spans 87 residues: Omega-theraphotoxin-Gr1a (87 aa).

The first 24 residues, 1-24 (MKAQIFVVVLGLAALSVLCYGSEA), serve as a signal peptide directing secretion. The propeptide occupies 25–49 (DESALHEEIFQLLAASDEVPKPQER). 3 disulfide bridges follow: Cys-51–Cys-65, Cys-58–Cys-70, and Cys-64–Cys-79. Val-85 carries the post-translational modification Valine amide.

Expressed by the venom gland.

It localises to the secreted. In terms of biological role, inhibits P/Q- (Cav2.1/CACNA1A) and N-type (Cav2.2/CACNA1B) voltage-gated calcium channel by modifying voltage-dependent gating. It selectively and reversibly blocks the calcium channels coupled to glutamate release. Also inhibits potassium channels (Kv2.1/KCNB1) with lower affinity. Has also been shown to weakly inhibit Kv11.1/KCNH2/ERG1, Kv1.2/KCNA2, Kv1.3/KCNA3, Nav1.5/SCN5A, Nav1.7/SCN9A and TRPV1. This chain is Omega-theraphotoxin-Gr1a, found in Grammostola rosea (Chilean rose tarantula).